The chain runs to 563 residues: Zinc finger CCHC domain-containing protein 7 (563 aa).

Disordered stretches follow at residues 41-64 and 133-157; these read SQNL…VPGA and SHST…QNSS. Polar residues predominate over residues 133-142; it reads SHSTPKVSAP. Residues 143–157 are compositionally biased toward low complexity; sequence QSNNFKSQKSCQNSS. CCHC-type zinc fingers lie at residues 265–282, 287–304, 305–322, 328–345, and 372–389; these read VVCR…NCPV, PACC…SCPS, RYCL…ECIE, KTCH…ACPE, and VYCC…ECKE. The tract at residues 443–494 is disordered; it reads KVDAKPPAKKRKKKHPSKKERKGTIRDYECAETKQKKKHKKRKSGLQEIEGD. Residues 449 to 463 are compositionally biased toward basic residues; that stretch reads PAKKRKKKHPSKKER. The segment covering 464 to 476 has biased composition (basic and acidic residues); that stretch reads KGTIRDYECAETK. The segment covering 477 to 486 has biased composition (basic residues); sequence QKKKHKKRKS.

Component of a nucleolar TRAMP-like complex, an ATP-dependent exosome regulatory complex consisting of a helicase (MTREX), an oligadenylate polymerase (PAPD5 or PAPD7), and a substrate specific RNA-binding factor (ZCCHC7 or ZCCHC8). Several TRAMP-like complexes exist with specific compositions and are associated with nuclear, or nucleolar RNA exosomes.

Its subcellular location is the nucleus. It is found in the nucleolus. The sequence is that of Zinc finger CCHC domain-containing protein 7 (zcchc7) from Xenopus laevis (African clawed frog).